The sequence spans 502 residues: ATP synthase subunit alpha (502 aa).

169 to 176 (GDRQTGKT) contributes to the ATP binding site.

The protein belongs to the ATPase alpha/beta chains family. In terms of assembly, F-type ATPases have 2 components, CF(1) - the catalytic core - and CF(0) - the membrane proton channel. CF(1) has five subunits: alpha(3), beta(3), gamma(1), delta(1), epsilon(1). CF(0) has three main subunits: a(1), b(2) and c(9-12). The alpha and beta chains form an alternating ring which encloses part of the gamma chain. CF(1) is attached to CF(0) by a central stalk formed by the gamma and epsilon chains, while a peripheral stalk is formed by the delta and b chains.

The protein localises to the cell inner membrane. It carries out the reaction ATP + H2O + 4 H(+)(in) = ADP + phosphate + 5 H(+)(out). In terms of biological role, produces ATP from ADP in the presence of a proton gradient across the membrane. The alpha chain is a regulatory subunit. The polypeptide is ATP synthase subunit alpha (Nitratidesulfovibrio vulgaris (strain ATCC 29579 / DSM 644 / CCUG 34227 / NCIMB 8303 / VKM B-1760 / Hildenborough) (Desulfovibrio vulgaris)).